Reading from the N-terminus, the 91-residue chain is DNA-directed RNA polymerase subunit omega (91 aa).

The protein belongs to the RNA polymerase subunit omega family. In terms of assembly, the RNAP catalytic core consists of 2 alpha, 1 beta, 1 beta' and 1 omega subunit. When a sigma factor is associated with the core the holoenzyme is formed, which can initiate transcription.

It catalyses the reaction RNA(n) + a ribonucleoside 5'-triphosphate = RNA(n+1) + diphosphate. In terms of biological role, promotes RNA polymerase assembly. Latches the N- and C-terminal regions of the beta' subunit thereby facilitating its interaction with the beta and alpha subunits. This is DNA-directed RNA polymerase subunit omega from Actinobacillus pleuropneumoniae serotype 5b (strain L20).